Reading from the N-terminus, the 226-residue chain is Lipoprotein-releasing system ATP-binding protein LolD 1 (226 aa).

The region spanning 5 to 225 (LKLDGIRKSY…IVRVVDGKIA (221 aa)) is the ABC transporter domain. 42-49 (GPSGSGKS) provides a ligand contact to ATP.

Belongs to the ABC transporter superfamily. Lipoprotein translocase (TC 3.A.1.125) family. As to quaternary structure, the complex is composed of two ATP-binding proteins (LolD) and two transmembrane proteins (LolC and LolE).

The protein localises to the cell inner membrane. Part of the ABC transporter complex LolCDE involved in the translocation of mature outer membrane-directed lipoproteins, from the inner membrane to the periplasmic chaperone, LolA. Responsible for the formation of the LolA-lipoprotein complex in an ATP-dependent manner. This is Lipoprotein-releasing system ATP-binding protein LolD 1 from Rhodopseudomonas palustris (strain ATCC BAA-98 / CGA009).